The chain runs to 827 residues: Lon protease (827 aa).

Residues 38–233 (LTLLASKYNV…VLLKYLLKDL (196 aa)) form the Lon N-terminal domain. 384–391 (GPPGVGKT) lines the ATP pocket. The Lon proteolytic domain maps to 619–800 (THLPGVAIGL…EEVIQLALQP (182 aa)). Residues S706 and K749 contribute to the active site.

This sequence belongs to the peptidase S16 family. In terms of assembly, homohexamer. Organized in a ring with a central cavity.

Its subcellular location is the cytoplasm. It carries out the reaction Hydrolysis of proteins in presence of ATP.. ATP-dependent serine protease that mediates the selective degradation of mutant and abnormal proteins as well as certain short-lived regulatory proteins. Required for cellular homeostasis and for survival from DNA damage and developmental changes induced by stress. Degrades polypeptides processively to yield small peptide fragments that are 5 to 10 amino acids long. Binds to DNA in a double-stranded, site-specific manner. In Amoebophilus asiaticus (strain 5a2), this protein is Lon protease.